We begin with the raw amino-acid sequence, 276 residues long: tRNA dimethylallyltransferase (276 aa).

An interaction with substrate tRNA region spans residues 9–12; it reads DSLS.

This sequence belongs to the IPP transferase family. Monomer. Mg(2+) is required as a cofactor.

The enzyme catalyses adenosine(37) in tRNA + dimethylallyl diphosphate = N(6)-dimethylallyladenosine(37) in tRNA + diphosphate. In terms of biological role, catalyzes the transfer of a dimethylallyl group onto the adenine at position 37 in tRNAs that read codons beginning with uridine, leading to the formation of N6-(dimethylallyl)adenosine (i(6)A). The protein is tRNA dimethylallyltransferase (miaA) of Helicobacter pylori (strain G27).